The primary structure comprises 413 residues: Hemolin (413 aa).

The first 19 residues, 1–19, serve as a signal peptide directing secretion; that stretch reads MAFKSIAVLSACIIVGSAL. Ig-like C2-type domains lie at 25-112, 122-211, 233-322, and 327-413; these read PVLK…RVIS, PAKT…EEVV, PQYV…LKLT, and PKYE…VQVN. Intrachain disulfides connect Cys-46/Cys-97, Cys-140/Cys-199, Cys-252/Cys-305, and Cys-349/Cys-395. N-linked (GlcNAc...) asparagine glycosylation is present at Asn-283.

It belongs to the hemolin family. In terms of tissue distribution, hemolymph.

It is found in the secreted. The protein resides in the extracellular space. Its function is as follows. Insect-immune protein. Forms a protein complex at the bacterial surface. Can inhibit hemocyte aggregation. The polypeptide is Hemolin (Hyalophora cecropia (Cecropia moth)).